The primary structure comprises 407 residues: Putative glycosyltransferase YtcC (407 aa).

The protein belongs to the glycosyltransferase group 1 family. Glycosyltransferase 4 subfamily.

The sequence is that of Putative glycosyltransferase YtcC (ytcC) from Bacillus subtilis (strain 168).